Consider the following 761-residue polypeptide: MNWRFVELLYFLFIWGRISVQPSHQEPAGTDQHVSKEFDWLISDRGPFHHSRSYLSFVERHRQGFTTRYKIYREFARWKVRNTAIERRDLVRHPVPLMPEFQRSIRLLGRRPTTQQFIDTIIKKYGTHLLISATLGGEEALTMYMDKSRLDRKSGNATQSVEALHQLASSYFVDRDGTMRRLHEIQISTGAIKVTETRTGPLGCNSYDNLDSVSSVLLQSTESKLHLQGLQIIFPQYLQEKFVQSALSYIMCNGEGEYLCQNSQCRCQCAEEFPQCNCPITDIQIMEYTLANMAKSWAEAYKDLENSDEFKSFMKRLPSNHFLTIGSIHQHWGNDWDLQNRYKLLQSATEAQRQKIQRTARKLFGLSVRCRHNPNHQLPRERTIQQWLARVQSLLYCNENGFWGTFLESQRSCVCHGSTTLCQRPIPCVIGGNNSCAMCSLANISLCGSCNKGYKLYRGRCEPQNVDSERSEQFISFETDLDFQDLELKYLLQKMDSRLYVHTTFISNEIRLDTFFDPRWRKRMSLTLKSNKNRMDFIHMVIGMSMRICQMRNSSLDPMFFVYVNPFSGSHSEGWNMPFGEFGYPRWEKIRLQNSQCYNWTLLLGNRWKTFFETVHIYLRSRTRLPTLLRNETGQGPVDLSDPSKRQFYIKISDVQVFGYSLRFNADLLRSAVQQVNQSYTQGGQFYSSSSVMLLLLDIRDRINRLAPPVAPGKPQLDLFSCMLKHRLKLTNSEIIRVNHALDLYNTEILKQSDQMTAKLC.

A signal peptide spans Met1 to Ser19. Positions Arg68–Met251 constitute an MACPF domain. N-linked (GlcNAc...) asparagine glycans are attached at residues Asn156, Asn433, Asn443, Asn553, Asn599, Asn631, and Asn677.

It belongs to the BRINP family. In terms of tissue distribution, highly expressed in brain. Weakly expressed in heart, lung, skeletal muscle, kidney, thymus, prostate, testis and small intestine.

The protein localises to the cytoplasm. Its function is as follows. Plays a role in neurogenesis and brain development. May suppress cell cycle progression in postmitotic neurons by inhibiting G1/S transition. This Homo sapiens (Human) protein is BMP/retinoic acid-inducible neural-specific protein 1 (BRINP1).